Here is a 294-residue protein sequence, read N- to C-terminus: N-acetylmuramic acid 6-phosphate etherase (294 aa).

In terms of domain architecture, SIS spans Val-54–Lys-217. Glu-82 serves as the catalytic Proton donor. Residue Glu-113 is part of the active site.

It belongs to the GCKR-like family. MurNAc-6-P etherase subfamily. In terms of assembly, homodimer.

The catalysed reaction is N-acetyl-D-muramate 6-phosphate + H2O = N-acetyl-D-glucosamine 6-phosphate + (R)-lactate. It participates in amino-sugar metabolism; N-acetylmuramate degradation. Functionally, specifically catalyzes the cleavage of the D-lactyl ether substituent of MurNAc 6-phosphate, producing GlcNAc 6-phosphate and D-lactate. This chain is N-acetylmuramic acid 6-phosphate etherase, found in Bacillus cereus (strain G9842).